The chain runs to 111 residues: UPF0321 protein P20C8.02c (111 aa).

The first 17 residues, 1–17 (MLLLFCICCVFIKLVLA), serve as a signal peptide directing secretion. Asparagine 20 is a glycosylation site (N-linked (GlcNAc...) asparagine).

The protein belongs to the UPF0321 family.

This Schizosaccharomyces pombe (strain 972 / ATCC 24843) (Fission yeast) protein is UPF0321 protein P20C8.02c.